The primary structure comprises 307 residues: Bifunctional protein FolD (307 aa).

Residues 170–172, Ser-195, and Ile-236 each bind NADP(+); that span reads GRS.

It belongs to the tetrahydrofolate dehydrogenase/cyclohydrolase family. In terms of assembly, homodimer.

The catalysed reaction is (6R)-5,10-methylene-5,6,7,8-tetrahydrofolate + NADP(+) = (6R)-5,10-methenyltetrahydrofolate + NADPH. It catalyses the reaction (6R)-5,10-methenyltetrahydrofolate + H2O = (6R)-10-formyltetrahydrofolate + H(+). The protein operates within one-carbon metabolism; tetrahydrofolate interconversion. Catalyzes the oxidation of 5,10-methylenetetrahydrofolate to 5,10-methenyltetrahydrofolate and then the hydrolysis of 5,10-methenyltetrahydrofolate to 10-formyltetrahydrofolate. The polypeptide is Bifunctional protein FolD (Sinorhizobium fredii (strain NBRC 101917 / NGR234)).